The sequence spans 157 residues: NADPH-dependent 7-cyano-7-deazaguanine reductase (157 aa).

The active-site Thioimide intermediate is C55. D62 serves as the catalytic Proton donor. Residues 77-79 (VES) and 96-97 (HE) contribute to the substrate site.

It belongs to the GTP cyclohydrolase I family. QueF type 1 subfamily.

The protein localises to the cytoplasm. It carries out the reaction 7-aminomethyl-7-carbaguanine + 2 NADP(+) = 7-cyano-7-deazaguanine + 2 NADPH + 3 H(+). The protein operates within tRNA modification; tRNA-queuosine biosynthesis. Its function is as follows. Catalyzes the NADPH-dependent reduction of 7-cyano-7-deazaguanine (preQ0) to 7-aminomethyl-7-deazaguanine (preQ1). The polypeptide is NADPH-dependent 7-cyano-7-deazaguanine reductase (Neisseria meningitidis serogroup C / serotype 2a (strain ATCC 700532 / DSM 15464 / FAM18)).